A 281-amino-acid chain; its full sequence is Deoxyribonuclease-1 (281 aa).

A signal peptide spans 1 to 21; the sequence is MRSEMLTALLTLAVLLQVAGS. The N-linked (GlcNAc...) asparagine glycan is linked to N39. E99 is a catalytic residue. C122 and C125 are oxidised to a cystine. H155 is an active-site residue.

The protein belongs to the DNase I family. The cofactor is Ca(2+). It depends on Mg(2+) as a cofactor. As to expression, equivalent levels in pancreas and parotid gland, low amounts in kidney, liver, small intestine, stomach and thymus.

It is found in the secreted. Its subcellular location is the zymogen granule. It localises to the nucleus envelope. The enzyme catalyses Endonucleolytic cleavage to 5'-phosphodinucleotide and 5'-phosphooligonucleotide end-products.. In terms of biological role, serum endocuclease secreted into body fluids by a wide variety of exocrine and endocrine organs. Expressed by non-hematopoietic tissues and preferentially cleaves protein-free DNA. Among other functions, seems to be involved in cell death by apoptosis. Binds specifically to G-actin and blocks actin polymerization. Preferentially attacks double-stranded DNA and produces oligonucleotides with 5'-phospho and 3'-hydroxy termini. Together with DNASE1L3, plays a key role in degrading neutrophil extracellular traps (NETs). NETs are mainly composed of DNA fibers and are released by neutrophils to bind pathogens during inflammation. Degradation of intravascular NETs by DNASE1 and DNASE1L3 is required to prevent formation of clots that obstruct blood vessels and cause organ damage following inflammation. This is Deoxyribonuclease-1 (DNASE1) from Oryctolagus cuniculus (Rabbit).